Here is a 287-residue protein sequence, read N- to C-terminus: Nucleotide-binding protein Dtpsy_0831 (287 aa).

Residue 10 to 17 (GMSGSGKS) participates in ATP binding. 59 to 62 (DVRS) contacts GTP.

Belongs to the RapZ-like family.

Displays ATPase and GTPase activities. The protein is Nucleotide-binding protein Dtpsy_0831 of Acidovorax ebreus (strain TPSY) (Diaphorobacter sp. (strain TPSY)).